Reading from the N-terminus, the 373-residue chain is Glutamine synthetase (373 aa).

A2 carries the N-acetylalanine modification. Positions 2–25 (ATSASSHLNKGIKQMYMSLPQGEK) are required for glutamine-induced ubiquitination by CRL4(CRBN) and proteasomal degradation. 2 positions are modified to N6-acetyllysine: K11 and K14. In terms of domain architecture, GS beta-grasp spans 24 to 106 (EKVQAMYIWV…VLCEVFKYNR (83 aa)). Position 104 is a phosphotyrosine (Y104). Residues 113-373 (LRHICKRIMD…TGDEPFQYKN (261 aa)) enclose the GS catalytic domain. Residue E134 coordinates ATP. The Mn(2+) site is built by E134, E136, E196, and E203. 203–208 (EFQIGP) is a binding site for ATP. An L-glutamate-binding site is contributed by 246 to 247 (NW). H253 lines the Mn(2+) pocket. ATP-binding positions include 255–257 (NFS), R319, and R324. R319 contacts L-glutamate. Residue 336 to 338 (YFE) participates in ADP binding. A Mn(2+)-binding site is contributed by E338. Position 340 (R340) interacts with L-glutamate. S343 carries the phosphoserine modification.

Belongs to the glutamine synthetase family. In terms of assembly, decamer; composed of two pentamers. Interacts with PALMD. Interacts with RHOJ. Interacts with BEST2; this interaction tethers a fraction of GLUL to the membrane, causing a decrease of cytosolic glutamine synthase (GS) activity and inhibits the chloride channel activity of BEST2 by affecting the gating at the aperture in the absence of intracellular glutamate. The cofactor is Mg(2+). Mn(2+) serves as cofactor. Acetylated by EP300/p300; acetylation is stimulated by increased glutamine levels and promotes ubiquitin-mediated proteasomal degradation. In terms of processing, palmitoylated; undergoes autopalmitoylation. Post-translationally, ubiquitinated by ZNRF1. Ubiquitinated by the DCX (DDB1-CUL4-X-box) E3 ubiquitin-protein ligase complex called CRL4(CRBN), leading to proteasomal degradation. In terms of tissue distribution, expressed in microvascular endothelial cells.

The protein resides in the cytoplasm. It is found in the cytosol. The protein localises to the microsome. Its subcellular location is the mitochondrion. It localises to the cell membrane. The enzyme catalyses L-glutamate + NH4(+) + ATP = L-glutamine + ADP + phosphate + H(+). The catalysed reaction is L-cysteinyl-[protein] + hexadecanoyl-CoA = S-hexadecanoyl-L-cysteinyl-[protein] + CoA. Its activity is regulated as follows. Glutamine synthetase activity is inhibited by methionine sulfoximine (MSO). Its function is as follows. Glutamine synthetase that catalyzes the ATP-dependent conversion of glutamate and ammonia to glutamine. Its role depends on tissue localization: in the brain, it regulates the levels of toxic ammonia and converts neurotoxic glutamate to harmless glutamine, whereas in the liver, it is one of the enzymes responsible for the removal of ammonia. Plays a key role in ammonium detoxification during erythropoiesis: the glutamine synthetase activity is required to remove ammonium generated by porphobilinogen deaminase (HMBS) during heme biosynthesis to prevent ammonium accumulation and oxidative stress. Essential for proliferation of fetal skin fibroblasts. Independently of its glutamine synthetase activity, required for endothelial cell migration during vascular development. Involved in angiogenesis by regulating membrane localization and activation of the GTPase RHOJ, possibly by promoting RHOJ palmitoylation. May act as a palmitoyltransferase for RHOJ: able to autopalmitoylate and then transfer the palmitoyl group to RHOJ. Plays a role in ribosomal 40S subunit biogenesis. Through the interaction with BEST2, inhibits BEST2 channel activity by affecting the gating at the aperture in the absence of intracellular L-glutamate, but sensitizes BEST2 to intracellular L-glutamate, which promotes the opening of BEST2 and thus relieves its inhibitory effect on BEST2. In Mus musculus (Mouse), this protein is Glutamine synthetase.